We begin with the raw amino-acid sequence, 146 residues long: Mitochondrial pyruvate carrier 3 (146 aa).

Residues 1 to 20 (MSASAFNFAFRRFWNSETGP) constitute a mitochondrion transit peptide. The next 3 membrane-spanning stretches (helical) occupy residues 23–39 (VHFW…FAGL), 55–71 (LSLL…SFVI), and 78–94 (LASV…YHLT).

This sequence belongs to the mitochondrial pyruvate carrier (MPC) (TC 2.A.105) family. The functional 150 kDa pyruvate import complex is a heteromer of MPC1 and either MPC2 or MPC3.

The protein resides in the mitochondrion. It localises to the mitochondrion inner membrane. Mediates the uptake of pyruvate into mitochondria. The chain is Mitochondrial pyruvate carrier 3 from Saccharomyces cerevisiae (strain ATCC 204508 / S288c) (Baker's yeast).